The chain runs to 142 residues: Putative 2'-deoxynucleoside 5'-phosphate N-hydrolase 1 (142 aa).

Residues 4–10 (FFSGSIR), Y19, H36, E82, and 106–108 (SAM) contribute to the substrate site.

The protein belongs to the 2'-deoxynucleoside 5'-phosphate N-hydrolase 1 family. As to quaternary structure, monomer and homodimer.

It catalyses the reaction a pyrimidine 2'-deoxyribonucleoside 5'-phosphate + H2O = a pyrimidine nucleobase + 2-deoxy-D-ribose 5-phosphate. The catalysed reaction is a purine 2'-deoxyribonucleoside 5'-phosphate + H2O = a purine nucleobase + 2-deoxy-D-ribose 5-phosphate. Functionally, catalyzes the cleavage of the N-glycosidic bond of deoxyribonucleoside 5'-monophosphates to yield deoxyribose 5-phosphate and a purine or pyrimidine base. In Syntrophotalea carbinolica (strain DSM 2380 / NBRC 103641 / GraBd1) (Pelobacter carbinolicus), this protein is Putative 2'-deoxynucleoside 5'-phosphate N-hydrolase 1.